A 152-amino-acid chain; its full sequence is Putative toxin MJ1304 (152 aa).

The region spanning 15–135 is the HEPN domain; it reads IKRAEEDLEV…EECLKDAENV (121 aa).

Functionally, putative toxin component of a putative type VII toxin-antitoxin (TA) system. Its cognate antitoxin might be MJ1305. The chain is Putative toxin MJ1304 from Methanocaldococcus jannaschii (strain ATCC 43067 / DSM 2661 / JAL-1 / JCM 10045 / NBRC 100440) (Methanococcus jannaschii).